The sequence spans 480 residues: Probable serine/threonine-protein phosphatase 2A regulatory subunit B'' subunit TON2 (480 aa).

EF-hand domains lie at Val186–Asn221, Thr294–Glu329, and Asp369–Lys404. Ca(2+) contacts are provided by Asp307, Asp309, Ser311, Ser313, and Glu318.

Interacts with PP2AA1. In terms of tissue distribution, widely expressed.

It localises to the cytoplasm. Its subcellular location is the cytoskeleton. Probable regulatory subunit of type 2A protein phosphatase involved in the control of the dynamic organization of the cortical cytoskeleton. Plays an important role in the organization of interphase microtubule arrays in part through the regulation of nucleation geometry. Required for the reorganization of cortical arrays in response to light. This chain is Probable serine/threonine-protein phosphatase 2A regulatory subunit B'' subunit TON2 (TON2), found in Arabidopsis thaliana (Mouse-ear cress).